The chain runs to 293 residues: Mating-type protein A-1 (293 aa).

Residues 42-97 (AAKKKVNGFMGFRSYYSPLFSQLPQKERSPFMTILWQHDPFHNEWDFMCSVYSSIR) constitute a DNA-binding region (alpha box).

The protein belongs to the MATALPHA1 family.

The protein resides in the nucleus. Its function is as follows. Mating type proteins are sequence specific DNA-binding proteins that act as master switches in yeast differentiation by controlling gene expression in a cell type-specific fashion. Transcriptional activator that induces the transcription of A-specific genes like mating factor ccg-4. Required for mating as an A-cell and for blocking of heterokaryon formation (vegetative incompatibility). The protein is Mating-type protein A-1 (mtA-1) of Neurospora crassa (strain ATCC 24698 / 74-OR23-1A / CBS 708.71 / DSM 1257 / FGSC 987).